Reading from the N-terminus, the 153-residue chain is UPF0251 protein Daud_0090 (153 aa).

Basic and acidic residues predominate over residues 129–138 (ELMTRPERCS). Residues 129–153 (ELMTRPERCSRPKRGAGKYRVPKKR) are disordered. Over residues 139–153 (RPKRGAGKYRVPKKR) the composition is skewed to basic residues.

It belongs to the UPF0251 family.

The polypeptide is UPF0251 protein Daud_0090 (Desulforudis audaxviator (strain MP104C)).